A 556-amino-acid polypeptide reads, in one-letter code: Bifunctional methyltransferase (556 aa).

Positions 1–310 (MQYSIQKFLN…NRVIEISLIQ (310 aa)) are RF MTase. S-adenosyl-L-methionine contacts are provided by residues 148 to 152 (GTGSG), D171, W200, and N215. Residue 215 to 218 (NPPY) coordinates substrate. Positions 313 to 556 (RSYARRIGKS…IITKIPPKSY (244 aa)) are tRNA MTase. The segment at 348–399 (KNYNSCKIKSNYTKFNLEKSKESVSRGAERIKIREHLRTYKEDVANFSSSTS) is insert. S-adenosyl-L-methionine contacts are provided by E403, E428, N455, and D477. D477 is an active-site residue. Substrate is bound by residues K481 and D513.

It in the C-terminal section; belongs to the class I-like SAM-binding methyltransferase superfamily. TrmB family. This sequence in the N-terminal section; belongs to the protein N5-glutamine methyltransferase family. PrmC subfamily.

The enzyme catalyses L-glutaminyl-[peptide chain release factor] + S-adenosyl-L-methionine = N(5)-methyl-L-glutaminyl-[peptide chain release factor] + S-adenosyl-L-homocysteine + H(+). It catalyses the reaction guanosine(46) in tRNA + S-adenosyl-L-methionine = N(7)-methylguanosine(46) in tRNA + S-adenosyl-L-homocysteine. Methylates the class 1 translation termination release factors RF1/PrfA and RF2/PrfB on the glutamine residue of the universally conserved GGQ motif. In terms of biological role, catalyzes the formation of N(7)-methylguanine at position 46 (m7G46) in tRNA. This Rickettsia bellii (strain RML369-C) protein is Bifunctional methyltransferase (prmC/trmB).